A 503-amino-acid chain; its full sequence is UDP-N-acetylmuramoylalanine--D-glutamate ligase (503 aa).

129–135 (GTNGKTT) contacts ATP.

It belongs to the MurCDEF family.

Its subcellular location is the cytoplasm. It catalyses the reaction UDP-N-acetyl-alpha-D-muramoyl-L-alanine + D-glutamate + ATP = UDP-N-acetyl-alpha-D-muramoyl-L-alanyl-D-glutamate + ADP + phosphate + H(+). The protein operates within cell wall biogenesis; peptidoglycan biosynthesis. Cell wall formation. Catalyzes the addition of glutamate to the nucleotide precursor UDP-N-acetylmuramoyl-L-alanine (UMA). The protein is UDP-N-acetylmuramoylalanine--D-glutamate ligase of Burkholderia vietnamiensis (strain G4 / LMG 22486) (Burkholderia cepacia (strain R1808)).